Consider the following 350-residue polypeptide: Protein RecA (350 aa).

An ATP-binding site is contributed by 67–74; sequence GPESSGKT.

It belongs to the RecA family.

It is found in the cytoplasm. Can catalyze the hydrolysis of ATP in the presence of single-stranded DNA, the ATP-dependent uptake of single-stranded DNA by duplex DNA, and the ATP-dependent hybridization of homologous single-stranded DNAs. It interacts with LexA causing its activation and leading to its autocatalytic cleavage. The chain is Protein RecA from Chromobacterium violaceum (strain ATCC 12472 / DSM 30191 / JCM 1249 / CCUG 213 / NBRC 12614 / NCIMB 9131 / NCTC 9757 / MK).